The following is a 558-amino-acid chain: Kelch-like protein 23 (558 aa).

One can recognise a BTB domain in the interval 36-104; the sequence is TDITLQCPSG…AYTSQIEITE (69 aa). The BACK domain maps to 139-240; the sequence is CIGMHSFAEF…DPVYLKTALG (102 aa). 6 Kelch repeats span residues 274–320, 321–369, 370–416, 418–466, 467–508, and 510–557; these read TMYI…CLGP, NIYV…TLGG, CVYA…VLHD, IYVI…PLEN, KLYL…IMNG, and IYVT…CVYN.

This is Kelch-like protein 23 (KLHL23) from Pongo abelii (Sumatran orangutan).